Reading from the N-terminus, the 647-residue chain is Zinc finger CCCH domain-containing protein 19 (647 aa).

2 C3H1-type zinc fingers span residues 16 to 45 (RRRS…HSDA) and 47 to 73 (RMNP…HPPL). Residues 78-106 (GAPTTPRTSQQSAPQVSVPAQAPVPNPAS) are disordered. Residues 86–106 (SQQSAPQVSVPAQAPVPNPAS) are compositionally biased toward low complexity. The C3H1-type 3 zinc-finger motif lies at 109-136 (AKQGVPCYYFQKGMCVKGDRCAFLHLPQ). Disordered regions lie at residues 155–280 (VPHP…RTNG), 308–327 (LSES…DSSD), 335–452 (QRRL…DAES), 512–580 (LKRK…LSPA), and 586–605 (EAAD…ETAE). 2 stretches are compositionally biased toward polar residues: residues 160–175 (LKNS…QQNA) and 189–203 (NGKT…NRAG). Positions 267-280 (SLREDRGAYRRTNG) are enriched in basic and acidic residues. Residues 347–359 (SDRHNVYPEDERH) are compositionally biased toward basic and acidic residues. Polar residues predominate over residues 369–379 (QASNDGVSSSR). The span at 419-433 (LRGKLHDRLKAKPNE) shows a compositional bias: basic and acidic residues. Positions 435-445 (VSGNVQSSLSK) are enriched in polar residues. Basic and acidic residues predominate over residues 527–536 (GSKREEHSGG).

This is Zinc finger CCCH domain-containing protein 19 from Oryza sativa subsp. japonica (Rice).